A 188-amino-acid polypeptide reads, in one-letter code: Chitin synthase 1 (188 aa).

Belongs to the chitin synthase family. Class I subfamily.

Its subcellular location is the cell membrane. It catalyses the reaction [(1-&gt;4)-N-acetyl-beta-D-glucosaminyl](n) + UDP-N-acetyl-alpha-D-glucosamine = [(1-&gt;4)-N-acetyl-beta-D-glucosaminyl](n+1) + UDP + H(+). In terms of biological role, polymerizes chitin, a structural polymer of the cell wall and septum, by transferring the sugar moiety of UDP-GlcNAc to the non-reducing end of the growing chitin polymer. The chain is Chitin synthase 1 (CHS1) from Ajellomyces dermatitidis (Blastomyces dermatitidis).